A 481-amino-acid chain; its full sequence is Glycosyl hydrolase family 109 protein 1 (481 aa).

A signal peptide (tat-type signal) is located at residues 1–29 (MDNSSSRRRFLQTLGLATGALAAGSFANA). NAD(+)-binding positions include 84 to 85 (ER), Asp106, 155 to 158 (WEWH), 175 to 176 (EV), and Asn204. Residues Tyr233, Arg252, 264 to 267 (YPTH), and Tyr347 each bind substrate. Tyr264 provides a ligand contact to NAD(+).

It belongs to the Gfo/Idh/MocA family. Glycosyl hydrolase 109 subfamily. It depends on NAD(+) as a cofactor. Predicted to be exported by the Tat system. The position of the signal peptide cleavage has not been experimentally proven.

Its function is as follows. Glycosidase. This Akkermansia muciniphila (strain ATCC BAA-835 / DSM 22959 / JCM 33894 / BCRC 81048 / CCUG 64013 / CIP 107961 / Muc) protein is Glycosyl hydrolase family 109 protein 1.